The chain runs to 466 residues: Purple acid phosphatase 25 (466 aa).

The N-terminal stretch at 1 to 21 is a signal peptide; that stretch reads MRMNKILLVFVFLSIATVINS. Residue aspartate 164 participates in Fe cation binding. Asparagine 172 carries N-linked (GlcNAc...) asparagine glycosylation. Fe cation-binding residues include aspartate 192 and tyrosine 195. Zn(2+) is bound at residue aspartate 192. Positions 229 and 314 each coordinate Zn(2+). Asparagine 229 is a substrate binding site. The Proton donor role is filled by histidine 324. Histidine 351 lines the Zn(2+) pocket. Residue 351–353 participates in substrate binding; it reads HVH. Histidine 353 lines the Fe cation pocket. 2 N-linked (GlcNAc...) asparagine glycosylation sites follow: asparagine 367 and asparagine 424.

The protein belongs to the metallophosphoesterase superfamily. Purple acid phosphatase family. As to quaternary structure, homodimer. Requires Fe cation as cofactor. Zn(2+) is required as a cofactor. Specifically expressed in flowers.

It localises to the secreted. The catalysed reaction is a phosphate monoester + H2O = an alcohol + phosphate. The protein is Purple acid phosphatase 25 (PAP25) of Arabidopsis thaliana (Mouse-ear cress).